The sequence spans 413 residues: Putative competence-damage inducible protein (413 aa).

The protein belongs to the CinA family.

The polypeptide is Putative competence-damage inducible protein (Lacticaseibacillus casei (strain BL23) (Lactobacillus casei)).